Consider the following 160-residue polypeptide: Deoxyuridine 5'-triphosphate nucleotidohydrolase (160 aa).

Substrate-binding positions include 79-81, Asn92, 96-98, and Lys106; these read RSG and TVD.

It belongs to the dUTPase family. Mg(2+) is required as a cofactor.

The catalysed reaction is dUTP + H2O = dUMP + diphosphate + H(+). It functions in the pathway pyrimidine metabolism; dUMP biosynthesis; dUMP from dCTP (dUTP route): step 2/2. Functionally, this enzyme is involved in nucleotide metabolism: it produces dUMP, the immediate precursor of thymidine nucleotides and it decreases the intracellular concentration of dUTP so that uracil cannot be incorporated into DNA. This chain is Deoxyuridine 5'-triphosphate nucleotidohydrolase, found in Sinorhizobium medicae (strain WSM419) (Ensifer medicae).